We begin with the raw amino-acid sequence, 259 residues long: Ribosome maturation factor RimP (259 aa).

A compositionally biased stretch (basic and acidic residues) spans arginine 186–lysine 195. The tract at residues arginine 186–aspartate 259 is disordered. Residues lysine 239–serine 248 are compositionally biased toward basic residues.

The protein belongs to the RimP family.

The protein localises to the cytoplasm. Required for maturation of 30S ribosomal subunits. In Rhodopseudomonas palustris (strain HaA2), this protein is Ribosome maturation factor RimP.